A 184-amino-acid polypeptide reads, in one-letter code: Putative axial regulator YABBY 2 (184 aa).

A C4-type zinc finger spans residues 15–42; that stretch reads CSFCTTILAVSVPYASLFTLVTVRCGHC. Composition is skewed to polar residues over residues 76 to 94 and 171 to 184; these read LVTR…NLSE and LDQS…NGYY. Disordered regions lie at residues 76–115 and 162–184; these read LVTR…RQRV and LDGN…NGYY.

The protein belongs to the YABBY family. As to quaternary structure, interacts with SPL/NZZ and SPEAR2. Expressed at low levels in abaxial regions of lateral aerial organ primordia leading to cotyledons, leaves, flower meristems, sepals, petals, stamen and carpels, but not in roots.

It localises to the nucleus. Its function is as follows. Involved in the abaxial cell fate determination during embryogenesis and organogenesis. This Arabidopsis thaliana (Mouse-ear cress) protein is Putative axial regulator YABBY 2 (YAB2).